The sequence spans 350 residues: MAQQAPDREKALELALAQIDKNFGKGSVMRLGEEVRQPIAVIPTGSIALDVALGIGGLPRGRVVEIYGPESSGKTTVALHAVANAQAAGGIAAFIDAEHALDPDYAQKLGVDTDALLVSQPDTGEQALEIADMLIRSGALDILVIDSVAALVPRAEIEGEMGDSHVGLQARLMSQALRKMTGALNNSGTTAIFINQLREKIGVMFGSPETTTGGKALKFYASVRMDVRRIETLKDGTDAVGNRTRVKVVKNKVSPPFKQAEFDILYGKGISREGSLIDMGVEHGFIRKSGSWFTYDGEQLGQGKENARNFLLQNVDVANEIEKKIKEKLGIGAQLTDDANDDALPAPVDF.

ATP is bound at residue 68-75 (GPESSGKT).

Belongs to the RecA family.

The protein localises to the cytoplasm. In terms of biological role, can catalyze the hydrolysis of ATP in the presence of single-stranded DNA, the ATP-dependent uptake of single-stranded DNA by duplex DNA, and the ATP-dependent hybridization of homologous single-stranded DNAs. It interacts with LexA causing its activation and leading to its autocatalytic cleavage. In Mycolicibacterium vanbaalenii (strain DSM 7251 / JCM 13017 / BCRC 16820 / KCTC 9966 / NRRL B-24157 / PYR-1) (Mycobacterium vanbaalenii), this protein is Protein RecA.